The primary structure comprises 72 residues: Large ribosomal subunit protein bL31 (72 aa).

4 residues coordinate Zn(2+): C16, C18, C38, and C41.

Belongs to the bacterial ribosomal protein bL31 family. Type A subfamily. Part of the 50S ribosomal subunit. Zn(2+) serves as cofactor.

In terms of biological role, binds the 23S rRNA. The protein is Large ribosomal subunit protein bL31 of Aliivibrio salmonicida (strain LFI1238) (Vibrio salmonicida (strain LFI1238)).